The primary structure comprises 355 residues: UDP-N-acetylglucosamine--N-acetylmuramyl-(pentapeptide) pyrophosphoryl-undecaprenol N-acetylglucosamine transferase (355 aa).

UDP-N-acetyl-alpha-D-glucosamine-binding positions include 15-17, asparagine 127, arginine 163, serine 191, isoleucine 244, 263-268, and glutamine 288; these read TGG and ALTVSE.

The protein belongs to the glycosyltransferase 28 family. MurG subfamily.

The protein localises to the cell inner membrane. The enzyme catalyses di-trans,octa-cis-undecaprenyl diphospho-N-acetyl-alpha-D-muramoyl-L-alanyl-D-glutamyl-meso-2,6-diaminopimeloyl-D-alanyl-D-alanine + UDP-N-acetyl-alpha-D-glucosamine = di-trans,octa-cis-undecaprenyl diphospho-[N-acetyl-alpha-D-glucosaminyl-(1-&gt;4)]-N-acetyl-alpha-D-muramoyl-L-alanyl-D-glutamyl-meso-2,6-diaminopimeloyl-D-alanyl-D-alanine + UDP + H(+). It functions in the pathway cell wall biogenesis; peptidoglycan biosynthesis. Functionally, cell wall formation. Catalyzes the transfer of a GlcNAc subunit on undecaprenyl-pyrophosphoryl-MurNAc-pentapeptide (lipid intermediate I) to form undecaprenyl-pyrophosphoryl-MurNAc-(pentapeptide)GlcNAc (lipid intermediate II). The sequence is that of UDP-N-acetylglucosamine--N-acetylmuramyl-(pentapeptide) pyrophosphoryl-undecaprenol N-acetylglucosamine transferase from Salmonella enteritidis PT4 (strain P125109).